An 81-amino-acid chain; its full sequence is Toxin TdNa10 (81 aa).

The N-terminal stretch at 1 to 20 (MWTFAIVLAFLLIGLDEGEA) is a signal peptide. Positions 21 to 81 (LDGYPLSKNN…KMYPGELPCH (61 aa)) constitute an LCN-type CS-alpha/beta domain. 4 cysteine pairs are disulfide-bonded: Cys32/Cys80, Cys36/Cys57, Cys42/Cys62, and Cys46/Cys64.

This sequence belongs to the long (4 C-C) scorpion toxin superfamily. Sodium channel inhibitor family. Beta subfamily. Expressed by the venom gland.

It localises to the secreted. In terms of biological role, alpha toxins bind voltage-independently at site-3 of sodium channels (Nav) and inhibit the inactivation of the activated channels, thereby blocking neuronal transmission. This toxin binds, in vitro, to sodium channels and inhibits the inactivation of the activated channels. Seems not toxic to mice, crickets and sweet-water shrimps. This is Toxin TdNa10 from Tityus discrepans (Venezuelan scorpion).